The following is a 1663-amino-acid chain: Complement C3 (1663 aa).

Positions 1-22 (MGPTSGPSLLLLLLTHLPLALG) are cleaved as a signal peptide. Ser-38 and Ser-70 each carry phosphoserine; by FAM20C. Asn-85 is a glycosylation site (N-linked (GlcNAc...) asparagine). Ser-297 and Ser-303 each carry phosphoserine; by FAM20C. 13 cysteine pairs are disulfide-bonded: Cys-559–Cys-816, Cys-627–Cys-662, Cys-693–Cys-720, Cys-694–Cys-727, Cys-707–Cys-728, Cys-873–Cys-1513, Cys-1101–Cys-1158, Cys-1358–Cys-1489, Cys-1389–Cys-1458, Cys-1506–Cys-1511, Cys-1518–Cys-1590, Cys-1537–Cys-1661, and Cys-1637–Cys-1646. Position 672 is a phosphoserine; by FAM20C (Ser-672). Residues 693-728 (CCEDGMRENPMRFSCQRRTRFISLGEACKKVFLDCC) form the Anaphylatoxin-like domain. An N-linked (GlcNAc...) asparagine glycan is attached at Asn-939. The segment at 954-973 (REGVQKEDIPPADLSDQVPD) is disordered. Phosphoserine; by FAM20C is present on Ser-968. The isoglutamyl cysteine thioester (Cys-Gln) cross-link spans 1010–1013 (CGEQ). Ser-1321 carries the post-translational modification Phosphoserine; by FAM20C. One can recognise an NTR domain in the interval 1518–1661 (CFIQKSDDKV…FTESMVVFGC (144 aa)). At Ser-1573 the chain carries Phosphoserine; by FAM20C. An N-linked (GlcNAc...) asparagine glycan is attached at Asn-1617. Residues 1634–1659 (EDECQDEENQKQCQDLGAFTESMVVF) are interaction with CFP/properdin.

In terms of assembly, in absence of complement activation, the C3 precursor is first processed by the removal of 4 Arg residues, forming two chains, beta and alpha, linked by a disulfide bond. As to quaternary structure, complement C3b is composed of complement C3b and complement C3 beta chains that are associated via disulfide bonds. Non-enzymatic component of the C5 convertase, also named C4bC2bC3b, composed of the serine protease complement C2b (C2), complement C3b, as well as complement C4b (C4). Non-enzymatic component of the C5 convertase of the alternative complement pathways composed of the serine protease complement CFB and complement C3b. Interacts with CFP; interaction takes place together with CFB in the alternative complement system and allows the complex to become active. Interacts with CR1 (via Sushi 8 and Sushi 9 domains). Interacts with CFH. Interacts with CFH. Interacts with CR2. In terms of assembly, during pregnancy, C3dg exists as a complex (probably a 2:2:2 heterohexamer) with AGT and the proform of PRG2. Interacts with CR2 (via the N-terminal Sushi domains 1 and 2). As to quaternary structure, (Microbial infection) C3b interacts with herpes simplex virus 1 (HHV-1) and herpes simplex virus 2 (HHV-2) envelope glycoprotein C; this interaction inhibits the activation of the complement system. (Microbial infection) Interacts with Staphylococcus aureus immunoglobulin-binding protein Sbi; this interaction prevents the association between C3dg and CR2. In terms of assembly, (Microbial infection) Interacts with Staphylococcus aureus protein Fib. C3 precursor is first processed by the removal of 4 Arg residues, forming two chains, beta and alpha, linked by a disulfide bond. During activation of the complement systems, the alpha chain is cleaved into C3a and C3b by the C3 convertase: C3b stays linked to the beta chain, while C3a is released in the plasma. The alpha chain is cleaved by the serine protease complement C2b component of the C3 convertase to generate C3a and C3b following activation by the classical, lectin and GZMK complement systems. The alpha chain is cleaved by CFB component of the C3 convertase to generate C3a and C3b following activation by the alternative complement system. Post-translationally, C3a is further processed by carboxypeptidases to release the C-terminal arginine residue generating the acylation stimulating protein (ASP). Levels of ASP are increased in adipocytes in the postprandial period and by insulin and dietary chylomicrons. In terms of processing, complement C3b is rapidly split in two positions by factor I (CFI) and a cofactor (CFH) to form iC3b (inactivated C3b) and C3f which is released. CFI and CFH catalyze proteolytic degradation of already-deposited complement C3b. Then iC3b is slowly cleaved (possibly by CFI) to form C3c (beta chain + alpha' chain fragment 1 + alpha' chain fragment 2), C3dg and C3f. Other proteases produce other fragments such as C3d or C3g. Upon activation, the internal thioester bond reacts with carbohydrate antigens on the target surface to form amide or ester bonds, leading to covalent association with the surface of pathogens. Post-translationally, complement C3b interacts with complement C4b via a thioester linkage. In terms of processing, phosphorylated by FAM20C in the extracellular medium. (Microbial infection) C3 is cleaved by Staphylococcus aureus aureolysin; this cleavage renders C3a and C3b inactive. C3b is rapidly degraded by host factors CFH and CFI preventing its deposition on the bacterial surface while C3a is further inactivated by aureolysin. Post-translationally, (Microbial infection) Complement C3 beta chain is cleaved and inactivated by S.pyogenes SpeB. In terms of processing, (Microbial infection) Cleaved by N.meningitidis NalP between Leu-744 and Gly-745, generating a slightly shorter C3 alpha form and a slightly longer C3 beta form. The C3b-like fragment is degraded in the presence of the complement regulators CFH and CFI, preventing its deposition on the bacterial surface. In terms of tissue distribution, plasma. As to expression, produced in adipocytes and released into the plasma during both the fasting and postprandial periods.

The protein localises to the secreted. It is found in the cell surface. Its activity is regulated as follows. Complement activation is inhibited by VSIG4. Precursor of non-enzymatic components of the classical, alternative, lectin and GZMK complement pathways, which consist in a cascade of proteins that leads to phagocytosis and breakdown of pathogens and signaling that strengthens the adaptive immune system. Its function is as follows. Non-enzymatic component of C5 convertase. Generated following cleavage by C3 convertase, it covalently attaches to the surface of pathogens, where it acts as an opsonin that marks the surface of antigens for removal. Complement C3b binds covalently via its reactive thioester, to cell surface carbohydrates or immune aggregates. Together with complement C4b, it then recruits the serine protease complement C2b to form the C5 convertase, which cleaves and activate C5, the next component of the complement pathways. In the alternative complement pathway, recruits the serine protease CFB to form the C5 convertase that cleaves and activates C5. In terms of biological role, mediator of local inflammatory process released following cleavage by C3 convertase. Acts by binding to its receptor, C3AR1, activating G protein-coupled receptor signaling, promoting the phosphorylation, ARRB2-mediated internalization and endocytosis of C3AR1. C3a anaphylatoxin stimulates the activation of immune cells such as mast cells and basophilic leukocytes to release inflammation agents, such as cytokines, chemokines and histamine, which promote inflammation development. Also acts as potent chemoattractant for the migration of macrophages and neutrophils to the inflamed tissues, resulting in neutralization of the inflammatory triggers by multiple ways, such as phagocytosis and generation of reactive oxidants. Functionally, adipogenic hormone that stimulates triglyceride synthesis and glucose transport in adipocytes, regulating fat storage and playing a role in postprandial triglyceride clearance. Appears to stimulate triglyceride synthesis via activation of the PLC, MAPK and AKT signaling pathways. Acts by binding to its receptor, C5AR2, activating G protein-coupled receptor signaling, promoting the phosphorylation, ARRB2-mediated internalization and endocytosis of C5AR2. Acts as a chemoattractant for neutrophils in chronic inflammation. This Homo sapiens (Human) protein is Complement C3.